Here is a 1093-residue protein sequence, read N- to C-terminus: TATA element modulatory factor (1093 aa).

Disordered regions lie at residues 38-80 and 108-189; these read WAET…SPKA and TIQK…DMKV. A compositionally biased stretch (polar residues) spans 51 to 70; sequence SPVSGGWDTSTWGLKSNTEP. 4 positions are modified to phosphoserine: serine 72, serine 77, serine 112, and serine 136. The span at 123–137 shows a compositional bias: basic and acidic residues; it reads QRPEEEVKSSLHESL. Over residues 139–158 the composition is skewed to polar residues; the sequence is IGQSRTPETTESQVKDSSLC. Positions 173-187 are enriched in basic and acidic residues; sequence TEGKHEETVNKESDM. A phosphoserine mark is found at serine 199 and serine 217. The segment covering 229–238 has biased composition (basic and acidic residues); that stretch reads PKEQKHEDRQ. Disordered regions lie at residues 229 to 260 and 266 to 285; these read PKEQ…SDIE and SVIS…SKSS. A compositionally biased stretch (low complexity) spans 246–257; that stretch reads VSTFSSGTSTTS. Serine 328, serine 330, serine 333, serine 338, serine 344, serine 413, serine 542, serine 925, and serine 928 each carry phosphoserine. Residues 333 to 342 form an interaction with Elongin BC complex region; sequence SLDSRSVSEI. Residues 439 to 922 are a coiled coil; it reads EALSEKEDVC…QETIKEKERK (484 aa). Residues 919-939 are disordered; it reads KERKPFSVSSTPTMSRSSSIS. Over residues 925–939 the composition is skewed to low complexity; the sequence is SVSSTPTMSRSSSIS. Threonine 929 carries the post-translational modification Phosphothreonine. Position 933 is a phosphoserine (serine 933). Residues 984-1092 are a coiled coil; sequence SIIENLQSQL…QIDELLRQSL (109 aa).

In terms of assembly, interacts with TRNP1; may regulate TRNP1 proteasomal degradation. Component of the SNF/SWI transcription factor complexes. Interacts with RAB6A. Interacts with STAT3 and FER. Interacts with TCEB1. Post-translationally, phosphorylated by FER.

The protein localises to the cytoplasm. The protein resides in the nucleus. Its subcellular location is the golgi apparatus membrane. Functionally, potential coactivator of the androgen receptor. Mediates STAT3 degradation. May play critical roles in two RAB6-dependent retrograde transport processes: one from endosomes to the Golgi and the other from the Golgi to the ER. This protein binds the HIV-1 TATA element and inhibits transcriptional activation by the TATA-binding protein (TBP). The polypeptide is TATA element modulatory factor (TMF1) (Homo sapiens (Human)).